Reading from the N-terminus, the 115-residue chain is Ribonuclease P protein component (115 aa).

This sequence belongs to the RnpA family. As to quaternary structure, consists of a catalytic RNA component (M1 or rnpB) and a protein subunit.

The enzyme catalyses Endonucleolytic cleavage of RNA, removing 5'-extranucleotides from tRNA precursor.. Its function is as follows. RNaseP catalyzes the removal of the 5'-leader sequence from pre-tRNA to produce the mature 5'-terminus. It can also cleave other RNA substrates such as 4.5S RNA. The protein component plays an auxiliary but essential role in vivo by binding to the 5'-leader sequence and broadening the substrate specificity of the ribozyme. This chain is Ribonuclease P protein component, found in Staphylococcus carnosus (strain TM300).